The primary structure comprises 340 residues: Protein RecA (340 aa).

Residue 65-72 (GPESGGKT) participates in ATP binding.

It belongs to the RecA family.

Its subcellular location is the cytoplasm. Functionally, can catalyze the hydrolysis of ATP in the presence of single-stranded DNA, the ATP-dependent uptake of single-stranded DNA by duplex DNA, and the ATP-dependent hybridization of homologous single-stranded DNAs. It interacts with LexA causing its activation and leading to its autocatalytic cleavage. This chain is Protein RecA, found in Thermus thermophilus.